The sequence spans 146 residues: Hemoglobin subunit beta (146 aa).

The region spanning 2–146 is the Globin domain; sequence QWTAEEKQLI…VAHALARKYH (145 aa). Heme b is bound by residues His-63 and His-92.

It belongs to the globin family. In terms of assembly, heterotetramer of two alpha chains and two beta chains. Red blood cells.

Its function is as follows. Involved in oxygen transport from the lung to the various peripheral tissues. This Sturnus vulgaris (Starling) protein is Hemoglobin subunit beta (HBB).